The primary structure comprises 68 residues: DNA-directed RNA polymerase subunit Rpo10 (68 aa).

Residues Cys7, Cys10, Cys44, and Cys45 each contribute to the Zn(2+) site.

The protein belongs to the archaeal Rpo10/eukaryotic RPB10 RNA polymerase subunit family. In terms of assembly, part of the RNA polymerase complex. Zn(2+) is required as a cofactor.

Its subcellular location is the cytoplasm. It catalyses the reaction RNA(n) + a ribonucleoside 5'-triphosphate = RNA(n+1) + diphosphate. DNA-dependent RNA polymerase (RNAP) catalyzes the transcription of DNA into RNA using the four ribonucleoside triphosphates as substrates. The sequence is that of DNA-directed RNA polymerase subunit Rpo10 from Methanococcus maripaludis (strain C7 / ATCC BAA-1331).